Reading from the N-terminus, the 587-residue chain is Arginine--tRNA ligase (587 aa).

The short motif at 127–137 (PNLAKEMHVGH) is the 'HIGH' region element.

Belongs to the class-I aminoacyl-tRNA synthetase family. As to quaternary structure, monomer.

It localises to the cytoplasm. It catalyses the reaction tRNA(Arg) + L-arginine + ATP = L-arginyl-tRNA(Arg) + AMP + diphosphate. This chain is Arginine--tRNA ligase, found in Pseudomonas aeruginosa (strain LESB58).